A 248-amino-acid chain; its full sequence is NAD-dependent protein deacylase 2 (248 aa).

Residues 1 to 248 form the Deacetylase sirtuin-type domain; the sequence is MLQAASALRH…HVMAELISHI (248 aa). NAD(+)-binding positions include 19–38 and 102–105; these read GAGL…GGLY and QNVD. Catalysis depends on His-122, which acts as the Proton acceptor. Positions 130, 133, 152, and 155 each coordinate Zn(2+). NAD(+) contacts are provided by residues 193-195, 219-221, and Ala-237; these read GTT and NPQ.

The protein belongs to the sirtuin family. Class III subfamily. Zn(2+) serves as cofactor.

The protein localises to the cytoplasm. The enzyme catalyses N(6)-acetyl-L-lysyl-[protein] + NAD(+) + H2O = 2''-O-acetyl-ADP-D-ribose + nicotinamide + L-lysyl-[protein]. Its function is as follows. NAD-dependent protein deacetylase which modulates the activities of several proteins which are inactive in their acetylated form. This is NAD-dependent protein deacylase 2 (cobB2) from Pseudomonas syringae pv. tomato (strain ATCC BAA-871 / DC3000).